A 676-amino-acid polypeptide reads, in one-letter code: Zinc finger protein 418 (676 aa).

One can recognise a KRAB domain in the interval 5–91; that stretch reads VAFEDVAVNF…HSCEMCGAIL (87 aa). C2H2-type zinc fingers lie at residues 82–105, 230–252, 258–280, 286–308, 314–336, 342–364, 370–392, 398–420, 426–448, 454–476, 482–504, 510–532, 538–560, 591–613, 619–641, and 647–669; these read HSCE…GTHH, CYCW…QRVH, YECG…QRVH, YECE…QRGH, YECE…HRVH, YECG…QRGH, YECG…QRSH, YECR…QRVH, YECN…QRVH, FECS…RRVH, YECG…QKTH, YECR…QRLH, YECS…RRVH, and YECS…QRVH.

It belongs to the krueppel C2H2-type zinc-finger protein family. As to expression, highly expressed in heart.

The protein localises to the nucleus. Transcriptional repressor. May play a role as regulator of the ubiquitin-proteasome system and autophagy-lysosomal pathway. This Homo sapiens (Human) protein is Zinc finger protein 418 (ZNF418).